The primary structure comprises 448 residues: MVCIKSSCVVKPSEPTPNVKLFLPESDQVKPWTHAPVFFVYQPEVDNSVSTSLENLKFSLSRALVPYYPLAGRLNGIGGGRFELHCNTMGAVIIEAESDARLEDFGDFRPTSETTKLAPYVDYAKDVSELPLLLVQLTRFKCGGIGIGIAMSHIVSDGKGAFGFITTWAKINRGEKGIIEPFHDRTAFYKGDPTAKPRCDHVELKGYPVLLGNKSAKEERAKETTTRMLNLSKNQVDKLKEKSNLGKPKDYVGREYSRFEAMSGHIWRCASKARRHENEQLTSLRITIDCRNRLRPPLPPRYSGNATMVTTSIAESGELLSNPLGLGFVCSVIRKCIDKVDDDYIKSATDFLISQDDLTPYRSGFHNVGSTEGVFLGNPNLAITSWVGLPINDVDFGWGKPIYMGPTALGYDGKLLIIPGKDDGSVIVPIRLQVAHIDDFEKFFYEDI.

Catalysis depends on proton acceptor residues His153 and Asp395.

The protein belongs to the plant acyltransferase family. Highly expressed in root and rhizome. Expressed in senescent leaf and callus tissues. Expressed in detached leaf treated for 18 hours with ethephon, methyl jasmonate, salicylic acid or illuminated for 24 hours with UV light. Not expressed in mature leaf. Expressed at low levels in leaves and flowers.

The catalysed reaction is (2R,3S)-piscidate + (E)-4-coumaroyl-CoA = cimicifugate K + CoA. The enzyme catalyses (2R,3S)-piscidate + (E)-caffeoyl-CoA = cimicifugate D + CoA. It catalyses the reaction (2R,3S)-piscidate + (E)-sinapoyl-CoA = cimicifugate J + CoA. It carries out the reaction (2R,3S)-piscidate + (E)-feruloyl-CoA = cimicifugate E + CoA. The protein operates within phenylpropanoid metabolism. Its function is as follows. Catalyzes the formation of cimicifugic acids. Uses hydroxycinnamoyl-CoA thioesters as hydroxycinnamoyl donor substrates. Has a strict specificity for piscidic acid as an acceptor substrate as none of the various other acceptors tested including 4-hydroxyphenyllactic acid, malate, spermidine or tetrahydroxyhexanedioic acid are substrates. Donor substrates include 4-coumaroyl-CoA, caffeoyl-CoA, sinapoyl-CoA and feruloyl-CoA. No activity with cinnamoyl-CoA, isoferuloyl-CoA, 3,4-dimethoxycinnamoyl-CoA or 3,4-dihydroxybenzoyl-CoA as donors. In the reverse reaction with fukinolic acid and CoA as substrates, a formation of fukiic acid is evident. Hence, fukiic acid may also serve as an acceptor substrate. Involved in the biosynthesis of cimicifugic and possibly fukinolic acids. This Actaea racemosa (Black cohosh) protein is Hydroxycinnamoyl-CoA:piscidic acid hydroxycinnamoyltransferase.